The sequence spans 1404 residues: DNA-directed RNA polymerase subunit beta' (1404 aa).

The Zn(2+) site is built by Cys70, Cys72, Cys85, and Cys88. Mg(2+)-binding residues include Asp460, Asp462, and Asp464. Zn(2+) is bound by residues Cys825, Cys899, Cys906, and Cys909.

Belongs to the RNA polymerase beta' chain family. In terms of assembly, the RNAP catalytic core consists of 2 alpha, 1 beta, 1 beta' and 1 omega subunit. When a sigma factor is associated with the core the holoenzyme is formed, which can initiate transcription. The cofactor is Mg(2+). It depends on Zn(2+) as a cofactor.

The enzyme catalyses RNA(n) + a ribonucleoside 5'-triphosphate = RNA(n+1) + diphosphate. Functionally, DNA-dependent RNA polymerase catalyzes the transcription of DNA into RNA using the four ribonucleoside triphosphates as substrates. This chain is DNA-directed RNA polymerase subunit beta', found in Nitrosomonas europaea (strain ATCC 19718 / CIP 103999 / KCTC 2705 / NBRC 14298).